Here is an 81-residue protein sequence, read N- to C-terminus: Exodeoxyribonuclease 7 small subunit (81 aa).

It belongs to the XseB family. In terms of assembly, heterooligomer composed of large and small subunits.

It is found in the cytoplasm. The catalysed reaction is Exonucleolytic cleavage in either 5'- to 3'- or 3'- to 5'-direction to yield nucleoside 5'-phosphates.. In terms of biological role, bidirectionally degrades single-stranded DNA into large acid-insoluble oligonucleotides, which are then degraded further into small acid-soluble oligonucleotides. This chain is Exodeoxyribonuclease 7 small subunit, found in Ruegeria sp. (strain TM1040) (Silicibacter sp.).